Here is a 130-residue protein sequence, read N- to C-terminus: Small ribosomal subunit protein uS9 (130 aa).

The interval 110–130 (AKERKKYGRKGARARFQFSKR) is disordered. Residues 111 to 130 (KERKKYGRKGARARFQFSKR) are compositionally biased toward basic residues.

This sequence belongs to the universal ribosomal protein uS9 family.

The chain is Small ribosomal subunit protein uS9 from Syntrophotalea carbinolica (strain DSM 2380 / NBRC 103641 / GraBd1) (Pelobacter carbinolicus).